The following is a 354-amino-acid chain: Tsukushi (354 aa).

Residues 1 to 17 form the signal peptide; the sequence is MLCSLFLLLLAVGRVQT. Residues 18 to 59 form the LRRNT domain; the sequence is TRPCFPGCQCEEETFGLFDSFSLIRVDCSSLGPHIVPVPIPL. LRR repeat units lie at residues 60 to 81, 86 to 107, 110 to 131, 133 to 154, 160 to 180, 186 to 207, 208 to 228, 231 to 253, 256 to 277, and 281 to 302; these read DTAH…VLAG, TLAG…AFSR, YLES…IFTS, PLSD…AFTT, ALHV…PARA, TIQS…RDLP, LRYL…AFMG, GLTH…GFRE, GLQV…EVFS, and LLQE…LLHH. N75 carries N-linked (GlcNAc...) asparagine glycosylation. N138 carries an N-linked (GlcNAc...) asparagine glycan. N191 carries an N-linked (GlcNAc...) asparagine glycan.

In terms of assembly, interacts with FZD4 (via FZ domain); competes with WNT2B for binding to FZD4, inhibiting Wnt signaling and repressing peripheral eye development. Interacts with TGFB1; the interaction contributes to regulation of the hair cycle. Interacts with netrin. Interacts with CCN2. As to expression, expressed in macrophages in inflamed wounds with wound expression starting 2 days post-wounding (dpw) (at protein level). At 7 dpw, expressed from epidermis and extracellular matrix in the wound edge to neoepidermis and granulation tissue and in panniculus carnosus under the granulation tissue (at protein level). After fibrosis, disappears in the dermal area at 11 dpw (at protein level). Expressed in the hair follicle during morphogenesis and the hair cycle (at protein level). In embryonic brain, strong expression in the olfactory bulb, anterior olfactory nucleus, neocortex, piriform cortex, glial wedge, midline zipper glia, indusium griseum and the area surrounding the anterior commissure (AC) but not on AC axons (at protein level). In the adult eye, expressed in retinal layers, lens epithelium, and ciliary body where it is expressed predominantly in the inner non-pigmented layer. Expressed in almost all brain regions in the embryo, in the cortex and the lateral ventricle at P0 and is restricted to the subventricular zone and lateral nucleus of the amygdala in adults. Prominent expression in hippocampal regions from early postnatal stages until postnatal day 15 and gradually declines at later stages. Expressed in almost all bone regions in the femurs of juveniles. In the inner ear, accumulates in nonprosensory regions during early embryonic stages and in both nonprosensory and prosensory regions in late embryonic stages. In the adult ear, expressed in the organ of Corti, spiral ganglion cells, and the stria vascularis. Highly expressed in the liver where it is detected primarily in hepatocytes but not in non-parenchymal cells.

The protein localises to the secreted. In terms of biological role, contributes to various developmental events and other processes such as wound healing and cholesterol homeostasis through its interactions with multiple signaling pathways. Wnt signaling inhibitor which competes with WNT2B for binding to Wnt receptor FZD4 and represses WNT2B-dependent development of the peripheral eye. Plays a role in regulating the hair cycle by controlling TGFB1 signaling. Required for the development of the anterior commissure in the brain by inhibiting neurite outgrowth. Essential for terminal differentiation of hippocampal neural stem cells. Plays a role in regulating bone elongation and bone mass by modulating growth plate chondrocyte function and overall body size. Required for development of the inner ear through its involvement in stereocilia formation in inner hair cells. Facilitates wound healing by inhibiting secretion of TGFB1 from macrophages which prevents myofibroblast differentiation, maintaining inflammatory cell quiescence. Plays a role in cholesterol homeostasis by reducing circulating high-density lipoprotein cholesterol, lowering cholesterol efflux capacity and decreasing cholesterol-to-bile acid conversion in the liver. In one study, shown to negatively regulate sympathetic innervation in brown fat, leading to reduced energy expenditure. In another study, shown not to affect brown fat thermogenic capacity, body weight gain or glucose homeostasis. In Mus musculus (Mouse), this protein is Tsukushi.